The sequence spans 363 residues: Aminomethyltransferase (363 aa).

Belongs to the GcvT family. In terms of assembly, the glycine cleavage system is composed of four proteins: P, T, L and H.

The enzyme catalyses N(6)-[(R)-S(8)-aminomethyldihydrolipoyl]-L-lysyl-[protein] + (6S)-5,6,7,8-tetrahydrofolate = N(6)-[(R)-dihydrolipoyl]-L-lysyl-[protein] + (6R)-5,10-methylene-5,6,7,8-tetrahydrofolate + NH4(+). Functionally, the glycine cleavage system catalyzes the degradation of glycine. The chain is Aminomethyltransferase from Thermotoga neapolitana (strain ATCC 49049 / DSM 4359 / NBRC 107923 / NS-E).